Here is a 458-residue protein sequence, read N- to C-terminus: UDP-N-acetylmuramoylalanine--D-glutamate ligase (458 aa).

124–130 (GSDGKTT) is a binding site for ATP.

The protein belongs to the MurCDEF family.

The protein localises to the cytoplasm. It catalyses the reaction UDP-N-acetyl-alpha-D-muramoyl-L-alanine + D-glutamate + ATP = UDP-N-acetyl-alpha-D-muramoyl-L-alanyl-D-glutamate + ADP + phosphate + H(+). Its pathway is cell wall biogenesis; peptidoglycan biosynthesis. In terms of biological role, cell wall formation. Catalyzes the addition of glutamate to the nucleotide precursor UDP-N-acetylmuramoyl-L-alanine (UMA). This Clostridium botulinum (strain Alaska E43 / Type E3) protein is UDP-N-acetylmuramoylalanine--D-glutamate ligase.